The following is a 2056-amino-acid chain: E3 ubiquitin-protein ligase TRIP12 (2056 aa).

Composition is skewed to polar residues over residues 1–10 and 18–27; these read MSSRPNNNPG and RNTAGAQPQE. Residues 1 to 440 form a disordered region; sequence MSSRPNNNPG…SGESESDDSE (440 aa). Residues 39-51 show a composition bias toward basic and acidic residues; sequence AENKTHSLPESRK. 2 stretches are compositionally biased toward polar residues: residues 58 to 67 and 153 to 168; these read KVQSNTTSGP and SQEQ…STSK. Low complexity-rich tracts occupy residues 213-226 and 234-253; these read LSKL…SAKA and SSSS…VSAA. Polar residues-rich tracts occupy residues 317 to 327 and 363 to 375; these read PGSSKTETSKP and QKTT…TSRR. Over residues 383–395 the composition is skewed to basic and acidic residues; sequence AAAEARRQEKMAD. The span at 415–433 shows a compositional bias: low complexity; it reads GAAASSSVAGAVGMTTSGE. The region spanning 791-905 is the WWE domain; the sequence is MLKKGNAQNT…DPELAKSFIK (115 aa). Residues 1027-1042 are compositionally biased toward low complexity; that stretch reads TTISTGSGTASGNSAA. 3 disordered regions span residues 1027–1147, 1465–1500, and 1632–1651; these read TTIS…ASKD, EEEE…DELW, and TNPE…PRLD. Residues 1069–1082 are compositionally biased toward basic residues; that stretch reads KRKRLPKRGPRRPK. Residues 1085 to 1094 are compositionally biased toward basic and acidic residues; that stretch reads PPRDEDKVDN. Composition is skewed to polar residues over residues 1095–1106 and 1119–1129; these read QAKSPTTTQSPK and RLSTQSNSNNI. The segment at 1560-1634 is K-box; sequence EIIPTSEFNN…AMQRLLDTNP (75 aa). One can recognise an HECT domain in the interval 1949-2056; the sequence is PDHGYTHDSR…REGQQSFHLS (108 aa). C2023 acts as the Glycyl thioester intermediate in catalysis.

It belongs to the UPL family. K-HECT subfamily.

It localises to the nucleus. The protein localises to the nucleoplasm. The enzyme catalyses S-ubiquitinyl-[E2 ubiquitin-conjugating enzyme]-L-cysteine + [acceptor protein]-L-lysine = [E2 ubiquitin-conjugating enzyme]-L-cysteine + N(6)-ubiquitinyl-[acceptor protein]-L-lysine.. It participates in protein modification; protein ubiquitination. E3 ubiquitin-protein ligase involved in ubiquitin fusion degradation (UFD) pathway and regulation of DNA repair. Part of the ubiquitin fusion degradation (UFD) pathway, a process that mediates ubiquitination of protein at their N-terminus, regardless of the presence of lysine residues in target proteins. Acts as a key regulator of DNA damage response by acting as a suppressor of RNF168, an E3 ubiquitin-protein ligase that promotes accumulation of 'Lys-63'-linked histone H2A and H2AX at DNA damage sites, thereby acting as a guard against excessive spreading of ubiquitinated chromatin at damaged chromosomes. The sequence is that of E3 ubiquitin-protein ligase TRIP12 (trip12) from Xenopus tropicalis (Western clawed frog).